A 47-amino-acid chain; its full sequence is Ribosome-inactivating protein luffin P1 (47 aa).

2 disulfides stabilise this stretch: Cys12–Cys33 and Cys16–Cys29.

As to quaternary structure, homotetramer.

The catalysed reaction is Endohydrolysis of the N-glycosidic bond at one specific adenosine on the 28S rRNA.. Its function is as follows. Inhibits protein synthesis in animal cells. The sequence is that of Ribosome-inactivating protein luffin P1 from Luffa aegyptiaca (Sponge gourd).